We begin with the raw amino-acid sequence, 174 residues long: Phospholipase A2-like protein Y52B11A.8 (174 aa).

Positions 1–18 (MRGLLVATWIFVSVAASA) are cleaved as a signal peptide. N-linked (GlcNAc...) asparagine glycosylation is found at Asn-49 and Asn-143. Positions 137 to 174 (YEASGPNASTTEESPAEKDDYDYESHVAGLNATPSSST) are disordered.

Belongs to the phospholipase A2 family.

It localises to the secreted. This Caenorhabditis elegans protein is Phospholipase A2-like protein Y52B11A.8.